The primary structure comprises 167 residues: Golgin subfamily A member 7B (167 aa).

2 S-palmitoyl cysteine lipidation sites follow: Cys-78 and Cys-81. The interval 140–167 is disordered; sequence RCSSGSSSSGSSSGSGSSSAGGGGAGAR. Low complexity predominate over residues 142 to 157; the sequence is SSGSSSSGSSSGSGSS. The span at 158-167 shows a compositional bias: gly residues; sequence SAGGGGAGAR.

The protein belongs to the ERF4 family. Palmitoylated by ZDHHC5. Palmitoylation is required for the maintenance of ZDHHC5 at the plasma membrane.

Its subcellular location is the cell membrane. It is found in the golgi apparatus membrane. In terms of biological role, play a role in cell adhesion by regulating the plasma membrane localization of the palmitoyltransferase ZDHHC5. May be involved in protein transport from Golgi to cell surface. The sequence is that of Golgin subfamily A member 7B (GOLGA7B) from Mus musculus (Mouse).